The chain runs to 381 residues: L-lactate dehydrogenase (381 aa).

An FMN hydroxy acid dehydrogenase domain is found at 1–380; that stretch reads MIISASTDYR…SADSLVRELG (380 aa). Residue Tyr24 participates in substrate binding. 2 residues coordinate FMN: Ser106 and Gln127. Substrate is bound at residue Tyr129. FMN is bound at residue Thr155. Arg164 provides a ligand contact to substrate. Residue Lys251 participates in FMN binding. His275 acts as the Proton acceptor in catalysis. Arg278 lines the substrate pocket. 306–330 lines the FMN pocket; sequence DSGIRTGLDVVRMIALGADSVLLGR.

It belongs to the FMN-dependent alpha-hydroxy acid dehydrogenase family. As to quaternary structure, homotetramer. FMN is required as a cofactor.

The protein localises to the cell inner membrane. The catalysed reaction is (S)-lactate + A = pyruvate + AH2. In terms of biological role, catalyzes the conversion of L-lactate to pyruvate. Is coupled to the respiratory chain. This Pseudomonas paraeruginosa (strain DSM 24068 / PA7) (Pseudomonas aeruginosa (strain PA7)) protein is L-lactate dehydrogenase.